The following is a 542-amino-acid chain: CTP synthase (542 aa).

An amidoligase domain region spans residues 1–265 (MTRYIFVTGG…DDFVVERFGL (265 aa)). S13 provides a ligand contact to CTP. UTP is bound at residue S13. ATP is bound by residues 14-19 (SLGKGI) and D71. Mg(2+) is bound by residues D71 and E139. CTP is bound by residues 146 to 148 (DIE), 186 to 191 (KTKPTQ), and K222. UTP-binding positions include 186–191 (KTKPTQ) and K222. In terms of domain architecture, Glutamine amidotransferase type-1 spans 290–541 (TIAMVGKYME…VKAALAQKNK (252 aa)). Residue G351 participates in L-glutamine binding. Catalysis depends on C378, which acts as the Nucleophile; for glutamine hydrolysis. L-glutamine contacts are provided by residues 379–382 (LGMQ), E402, and R469. Catalysis depends on residues H514 and E516.

This sequence belongs to the CTP synthase family. In terms of assembly, homotetramer.

The catalysed reaction is UTP + L-glutamine + ATP + H2O = CTP + L-glutamate + ADP + phosphate + 2 H(+). It catalyses the reaction L-glutamine + H2O = L-glutamate + NH4(+). The enzyme catalyses UTP + NH4(+) + ATP = CTP + ADP + phosphate + 2 H(+). Its pathway is pyrimidine metabolism; CTP biosynthesis via de novo pathway; CTP from UDP: step 2/2. Its activity is regulated as follows. Allosterically activated by GTP, when glutamine is the substrate; GTP has no effect on the reaction when ammonia is the substrate. The allosteric effector GTP functions by stabilizing the protein conformation that binds the tetrahedral intermediate(s) formed during glutamine hydrolysis. Inhibited by the product CTP, via allosteric rather than competitive inhibition. Functionally, catalyzes the ATP-dependent amination of UTP to CTP with either L-glutamine or ammonia as the source of nitrogen. Regulates intracellular CTP levels through interactions with the four ribonucleotide triphosphates. The protein is CTP synthase of Pseudomonas putida (strain ATCC 700007 / DSM 6899 / JCM 31910 / BCRC 17059 / LMG 24140 / F1).